Here is a 110-residue protein sequence, read N- to C-terminus: NADH-quinone oxidoreductase subunit K (110 aa).

3 consecutive transmembrane segments (helical) span residues 13–33, 41–61, and 73–93; these read LNHYLILSSLVFTIGMFGLFM, ILMSIELMLLAVNINFVAFSI, and IIILTVAAAETSIGLAILLIY.

The protein belongs to the complex I subunit 4L family. In terms of assembly, NDH-1 is composed of 14 different subunits. Subunits NuoA, H, J, K, L, M, N constitute the membrane sector of the complex.

It localises to the cell inner membrane. The enzyme catalyses a quinone + NADH + 5 H(+)(in) = a quinol + NAD(+) + 4 H(+)(out). Its function is as follows. NDH-1 shuttles electrons from NADH, via FMN and iron-sulfur (Fe-S) centers, to quinones in the respiratory chain. The immediate electron acceptor for the enzyme in this species is believed to be ubiquinone. Couples the redox reaction to proton translocation (for every two electrons transferred, four hydrogen ions are translocated across the cytoplasmic membrane), and thus conserves the redox energy in a proton gradient. This is NADH-quinone oxidoreductase subunit K from Rickettsia felis (strain ATCC VR-1525 / URRWXCal2) (Rickettsia azadi).